A 512-amino-acid chain; its full sequence is Ribonuclease Y (512 aa).

Residues 2–22 (VGMYIIIPIVTFIIGGLLAWL) traverse the membrane as a helical segment. Residues 202–262 (SITVFHIESD…VRREIARLAL (61 aa)) form the KH domain. An HD domain is found at 328–421 (LLQHARETAN…VQVCDAISGA (94 aa)).

It belongs to the RNase Y family.

The protein resides in the cell membrane. In terms of biological role, endoribonuclease that initiates mRNA decay. The polypeptide is Ribonuclease Y (Parabacteroides distasonis (strain ATCC 8503 / DSM 20701 / CIP 104284 / JCM 5825 / NCTC 11152)).